Reading from the N-terminus, the 335-residue chain is UPF0353 protein MAV335 (335 aa).

A run of 2 helical transmembrane segments spans residues 18–38 (WFFL…LMQL) and 67–87 (LPAI…AGPT). One can recognise a VWFA domain in the interval 98-295 (VVMLVIDVSQ…QELKSVYATL (198 aa)). The chain crosses the membrane as a helical span at residues 309–329 (SVGWVRLGALVLRLAADALLI).

It belongs to the UPF0353 family.

It localises to the cell membrane. In Mycobacterium avium, this protein is UPF0353 protein MAV335.